Consider the following 73-residue polypeptide: Protein SlyX homolog (73 aa).

This sequence belongs to the SlyX family.

In Haemophilus influenzae (strain PittEE), this protein is Protein SlyX homolog.